Here is an 88-residue protein sequence, read N- to C-terminus: MLDTKFHELLDFPAAFPFKVVGDARDTLADDVVAVVQRHVPGDYMPTSRASSKGSYHSITVKVTVHSKEQIELLYIELAAIEGVKRVL.

It belongs to the UPF0250 family.

This is UPF0250 protein Shew_2940 from Shewanella loihica (strain ATCC BAA-1088 / PV-4).